The sequence spans 587 residues: Trihelix transcription factor GTL1 (587 aa).

Gly residues-rich tracts occupy residues Met1–Asn10 and Gly41–Ser54. The tract at residues Met1–Trp63 is disordered. In terms of domain architecture, Myb-like 1 spans Ala55–Gln119. The Nuclear localization signal 1 motif lies at Ser96–Gly103. Positions Ser173–Thr194 are enriched in low complexity. The segment at Ser173–Gly264 is disordered. Positions Pro201–Ser210 are enriched in pro residues. Positions Ser221 to Gly232 are enriched in low complexity. Over residues Ser233–Val242 the composition is skewed to acidic residues. Residues Gln285–Ser328 are a coiled coil. The disordered stretch occupies residues Gln348–Arg435. Pro residues predominate over residues Gln356–Ala366. 2 stretches are compositionally biased toward low complexity: residues Ala379 to Ile395 and Gln411 to Ser434. The Myb-like 2 domain maps to Ser434–Asn492. A Nuclear localization signal 2 motif is present at residues Met472–Arg479. The interval Gly530 to Leu587 is disordered. Composition is skewed to polar residues over residues Leu538–Val547 and Asn559–Ser568.

Mostly expressed in siliques, and, to a lower extent, in growing root hairs, leaves, stems, and flowers. Present in abaxial epidermal cells, predominantly in guard cells, pavement cells, and meristemoids.

It localises to the nucleus. Transcription repressor that binds specific DNA sequence such as GT3 box 5'-GGTAAA-3' in the SDD1 promoter. Negative regulator of water use efficiency (WUE) via the promotion of stomatal density and distribution by the transcription repression of SDD1. Regulates the expression of several cell cycle genes and endoreduplication, especially in trichomes where it prevents ploidy-dependent plant cell growth. Regulates negatively root hair growth by directly binding RSL4 promoter and repressing RSL4 expression. This is Trihelix transcription factor GTL1 from Arabidopsis thaliana (Mouse-ear cress).